The following is a 520-amino-acid chain: Cilia- and flagella-associated protein 157 (520 aa).

Residues methionine 1–lysine 22 form a disordered region. Positions alanine 10–lysine 22 are enriched in basic and acidic residues. Coiled coils occupy residues leucine 33–lysine 189 and leucine 236–serine 372. The tract at residues proline 416–aspartate 453 is disordered. Polar residues predominate over residues proline 437–aspartate 453.

Belongs to the CFAP157 family. Interacts with TUBB and TUBA4A. Interacts with CEP350.

Its subcellular location is the cytoplasm. It is found in the cytoskeleton. The protein localises to the cilium basal body. Its function is as follows. Specifically required during spermatogenesis for flagellum morphogenesis and sperm motility. May be required to suppress the formation of supernumerary axonemes and ensure a correct ultrastructure. The chain is Cilia- and flagella-associated protein 157 from Homo sapiens (Human).